Reading from the N-terminus, the 416-residue chain is Protein MID1-COMPLEMENTING ACTIVITY 2 (416 aa).

The stretch at 191 to 219 (CEALKTEEEKLQLELQRSRARYDADQCEV) forms a coiled coil. The helical transmembrane segment at 338–354 (LIVYSLILSCCCYTCCI) threads the bilayer.

As to expression, expressed in roots, leaves, stems, flowers and siliques. In the root, high levels of expression in vascular tissues, in the stele and endodermis, but no expression in the cortex, epidermis, root cap, promeristem and adjacent elongation zone of the primary root. Not expressed in root hairs. Detected in shoot apical meristem, leaf mesophyll cells and vascular tissues, upper half of inflorescence, but not in petioles of rosette leaves.

The protein resides in the cell membrane. Inhibited by GdCl(3), but not by verapamil. Functionally, calcium-permeable stretch-activated channel component. Probably involved in mechanosensing and in mechano-stimulated calcium uptake mechanism. This chain is Protein MID1-COMPLEMENTING ACTIVITY 2 (MCA2), found in Arabidopsis thaliana (Mouse-ear cress).